The primary structure comprises 219 residues: Ran-specific GTPase-activating protein 1 (219 aa).

3 stretches are compositionally biased toward basic and acidic residues: residues 1 to 12 (MAEVERKEEQAK), 33 to 45 (AVGD…EAKK), and 57 to 72 (PRKD…DNID). The disordered stretch occupies residues 1–72 (MAEVERKEEQ…KGGEERDNID (72 aa)). The RanBD1 domain maps to 70 to 210 (NIDAAEVVEK…YDLGRAHNEK (141 aa)).

Belongs to the RANBP1 family.

The protein localises to the cytoplasm. It is found in the nucleus. Important for the export of protein containing nuclear export signal (NES) out of the nucleus. The protein is Ran-specific GTPase-activating protein 1 (YRB1) of Encephalitozoon cuniculi (strain GB-M1) (Microsporidian parasite).